The primary structure comprises 268 residues: Trans-aconitate 2-methyltransferase (268 aa).

Belongs to the methyltransferase superfamily. Tam family.

The protein localises to the cytoplasm. It carries out the reaction trans-aconitate + S-adenosyl-L-methionine = (E)-3-(methoxycarbonyl)pent-2-enedioate + S-adenosyl-L-homocysteine. Functionally, catalyzes the S-adenosylmethionine monomethyl esterification of trans-aconitate. This is Trans-aconitate 2-methyltransferase from Delftia acidovorans (strain DSM 14801 / SPH-1).